The following is a 171-amino-acid chain: ATP synthase subunit b (171 aa).

Residues 26-46 (INLVLVIALLVYFLKGFLGGI) form a helical membrane-spanning segment.

Belongs to the ATPase B chain family. F-type ATPases have 2 components, F(1) - the catalytic core - and F(0) - the membrane proton channel. F(1) has five subunits: alpha(3), beta(3), gamma(1), delta(1), epsilon(1). F(0) has four main subunits: a(1), b(1), b'(1) and c(10-14). The alpha and beta chains form an alternating ring which encloses part of the gamma chain. F(1) is attached to F(0) by a central stalk formed by the gamma and epsilon chains, while a peripheral stalk is formed by the delta, b and b' chains.

The protein localises to the cellular thylakoid membrane. F(1)F(0) ATP synthase produces ATP from ADP in the presence of a proton or sodium gradient. F-type ATPases consist of two structural domains, F(1) containing the extramembraneous catalytic core and F(0) containing the membrane proton channel, linked together by a central stalk and a peripheral stalk. During catalysis, ATP synthesis in the catalytic domain of F(1) is coupled via a rotary mechanism of the central stalk subunits to proton translocation. In terms of biological role, component of the F(0) channel, it forms part of the peripheral stalk, linking F(1) to F(0). This chain is ATP synthase subunit b, found in Synechococcus sp. (strain RCC307).